A 128-amino-acid chain; its full sequence is Early 3 14.7 kDa protein (128 aa).

This sequence belongs to the adenoviridae E3_15 family. In terms of assembly, may bind to host IKBKG, OPTN and RRAGA.

Its subcellular location is the host cytoplasm. It is found in the host nucleus. Functionally, may prevent Nf-kappaB activation by immune signals like Tumor necrosis factor, presumably by inhibiting NFKB1 dimer DNA-binding. May act directly at the TNF receptor to inhibit signaling. The chain is Early 3 14.7 kDa protein from Human adenovirus C serotype 2 (HAdV-2).